A 271-amino-acid polypeptide reads, in one-letter code: Uridine-cytidine kinase 1-B (271 aa).

An ATP-binding site is contributed by 24–32 (GGTASGKST). Substrate is bound by residues Asp81, Tyr109, His114, Arg163, Arg172, and Gln180. Asp209 contacts ATP. Positions 240–271 (RSQKRTLPGQGDSGGLLLQGKRTHLESSSRPH) are disordered. The segment covering 246–259 (LPGQGDSGGLLLQG) has biased composition (low complexity). Residues 262 to 271 (THLESSSRPH) show a composition bias toward basic and acidic residues.

The protein belongs to the uridine kinase family.

The enzyme catalyses uridine + ATP = UMP + ADP + H(+). The catalysed reaction is cytidine + ATP = CMP + ADP + H(+). It functions in the pathway pyrimidine metabolism; CTP biosynthesis via salvage pathway; CTP from cytidine: step 1/3. The protein operates within pyrimidine metabolism; UMP biosynthesis via salvage pathway; UMP from uridine: step 1/1. Functionally, phosphorylates uridine and cytidine to uridine monophosphate and cytidine monophosphate. Does not phosphorylate deoxyribonucleosides or purine ribonucleosides. Can use ATP or GTP as a phosphate donor. This is Uridine-cytidine kinase 1-B (uck1-b) from Xenopus laevis (African clawed frog).